A 488-amino-acid chain; its full sequence is Probable cytosol aminopeptidase (488 aa).

Mn(2+)-binding residues include K254 and D259. Residue K266 is part of the active site. D277, D336, and E338 together coordinate Mn(2+). R340 is an active-site residue.

This sequence belongs to the peptidase M17 family. Mn(2+) is required as a cofactor.

Its subcellular location is the cytoplasm. The catalysed reaction is Release of an N-terminal amino acid, Xaa-|-Yaa-, in which Xaa is preferably Leu, but may be other amino acids including Pro although not Arg or Lys, and Yaa may be Pro. Amino acid amides and methyl esters are also readily hydrolyzed, but rates on arylamides are exceedingly low.. It catalyses the reaction Release of an N-terminal amino acid, preferentially leucine, but not glutamic or aspartic acids.. Its function is as follows. Presumably involved in the processing and regular turnover of intracellular proteins. Catalyzes the removal of unsubstituted N-terminal amino acids from various peptides. This chain is Probable cytosol aminopeptidase, found in Roseiflexus castenholzii (strain DSM 13941 / HLO8).